The following is a 426-amino-acid chain: MGATGSSQLEKEISTTESVNNANEHYYGLVNFGNTCYCNSVIQALFFCRPFREKVLNYKQTLKKSGASKDNLVTCLADLFHSIASQKRRVGTIAPKRFITKLKKENELFDNYMQQDAHEFFNYLINTISETLIQEKIAEREKASRHGTLKKGNVTVNLAPATAGLPRSDEKGTSERNGGITVEGNEFLNKSDTTTWIHEIFQGILTNETRCLSCETVSSKDEDFLDLSIDVEQNTSISHCLRVFSETETLCGDQKYFCETCSSKQEAQKRMRIKKPPQLLALHLKRFKFVEPLNRHTKLSYRVVFPLELRLFNVSDDAEYGDRMYDLVATVVHCGATPNRGHYITLVKSNSFWLVFDDDIVEKLEVSSMEEFSGMSTDANIQMPPGNQSAPQKNSESAYILFYQARDYAADDPNHNHKGKNSTHSV.

Residue Gly2 is the site of N-myristoyl glycine attachment. The USP domain maps to 27–406; it reads YGLVNFGNTC…SAYILFYQAR (380 aa). Catalysis depends on Cys36, which acts as the Nucleophile. Positions 162-181 are disordered; the sequence is TAGLPRSDEKGTSERNGGIT. The active-site Proton acceptor is the His342.

Belongs to the peptidase C19 family. Interacts with wdr-20 and wdr-48; the catalytic activity of usp-46 is increased in the presence of both wdr-20 and wdr-48. Interacts with glr-1; the interaction results in deubiquitination of glr-1. In terms of tissue distribution, expressed in a number of tissues including the nervous system, pharynx, body wall muscle, vulva muscle and intestine and is detected in many head and ventral cord neurons.

It is found in the perikaryon. The protein localises to the cytoplasm. It carries out the reaction Thiol-dependent hydrolysis of ester, thioester, amide, peptide and isopeptide bonds formed by the C-terminal Gly of ubiquitin (a 76-residue protein attached to proteins as an intracellular targeting signal).. Its function is as follows. Regulates the abundance of the glr-1 glutamate receptor in the ventral nerve cord by promoting its deubiquitination and preventing its degradation in the lysosome. Contributes to the regulation of embryonic polarity. The polypeptide is Ubiquitin carboxyl-terminal hydrolase 46 (usp-46) (Caenorhabditis elegans).